Reading from the N-terminus, the 605-residue chain is Elongation factor 4 (605 aa).

In terms of domain architecture, tr-type G spans Lys10–His192. GTP contacts are provided by residues Asp22–Thr27 and Asn139–Asp142.

This sequence belongs to the TRAFAC class translation factor GTPase superfamily. Classic translation factor GTPase family. LepA subfamily.

It is found in the cell inner membrane. The enzyme catalyses GTP + H2O = GDP + phosphate + H(+). Required for accurate and efficient protein synthesis under certain stress conditions. May act as a fidelity factor of the translation reaction, by catalyzing a one-codon backward translocation of tRNAs on improperly translocated ribosomes. Back-translocation proceeds from a post-translocation (POST) complex to a pre-translocation (PRE) complex, thus giving elongation factor G a second chance to translocate the tRNAs correctly. Binds to ribosomes in a GTP-dependent manner. This is Elongation factor 4 from Chelativorans sp. (strain BNC1).